Here is a 410-residue protein sequence, read N- to C-terminus: Lipoyl synthase, mitochondrial (410 aa).

[4Fe-4S] cluster-binding residues include C125, C130, C136, C157, C161, C164, and S373. The Radical SAM core domain maps to 140–362; it reads SDEEGTATAT…EKEAMDMGFL (223 aa).

This sequence belongs to the radical SAM superfamily. Lipoyl synthase family. Requires [4Fe-4S] cluster as cofactor.

The protein localises to the mitochondrion. It carries out the reaction [[Fe-S] cluster scaffold protein carrying a second [4Fe-4S](2+) cluster] + N(6)-octanoyl-L-lysyl-[protein] + 2 oxidized [2Fe-2S]-[ferredoxin] + 2 S-adenosyl-L-methionine + 4 H(+) = [[Fe-S] cluster scaffold protein] + N(6)-[(R)-dihydrolipoyl]-L-lysyl-[protein] + 4 Fe(3+) + 2 hydrogen sulfide + 2 5'-deoxyadenosine + 2 L-methionine + 2 reduced [2Fe-2S]-[ferredoxin]. It functions in the pathway protein modification; protein lipoylation via endogenous pathway; protein N(6)-(lipoyl)lysine from octanoyl-[acyl-carrier-protein]: step 2/2. In terms of biological role, catalyzes the radical-mediated insertion of two sulfur atoms into the C-6 and C-8 positions of the octanoyl moiety bound to the lipoyl domains of lipoate-dependent enzymes, thereby converting the octanoylated domains into lipoylated derivatives. The protein is Lipoyl synthase, mitochondrial of Leishmania major.